The primary structure comprises 481 residues: Glutamate--tRNA ligase (481 aa).

A 'HIGH' region motif is present at residues 11 to 21; the sequence is PSPTGLLHIGN. The short motif at 255 to 259 is the 'KMSKS' region element; that stretch reads KLSKR. K258 provides a ligand contact to ATP.

The protein belongs to the class-I aminoacyl-tRNA synthetase family. Glutamate--tRNA ligase type 1 subfamily. In terms of assembly, monomer.

The protein localises to the cytoplasm. It catalyses the reaction tRNA(Glu) + L-glutamate + ATP = L-glutamyl-tRNA(Glu) + AMP + diphosphate. Its function is as follows. Catalyzes the attachment of glutamate to tRNA(Glu) in a two-step reaction: glutamate is first activated by ATP to form Glu-AMP and then transferred to the acceptor end of tRNA(Glu). In Streptococcus pyogenes serotype M3 (strain ATCC BAA-595 / MGAS315), this protein is Glutamate--tRNA ligase.